A 430-amino-acid chain; its full sequence is Enolase (430 aa).

Residue Gln164 coordinates (2R)-2-phosphoglycerate. Glu208 (proton donor) is an active-site residue. Residues Asp245, Glu288, and Asp315 each contribute to the Mg(2+) site. Residues Lys340, Arg369, Ser370, and Lys391 each coordinate (2R)-2-phosphoglycerate. Lys340 (proton acceptor) is an active-site residue.

Belongs to the enolase family. Requires Mg(2+) as cofactor.

The protein resides in the cytoplasm. The protein localises to the secreted. It localises to the cell surface. It carries out the reaction (2R)-2-phosphoglycerate = phosphoenolpyruvate + H2O. It functions in the pathway carbohydrate degradation; glycolysis; pyruvate from D-glyceraldehyde 3-phosphate: step 4/5. In terms of biological role, catalyzes the reversible conversion of 2-phosphoglycerate (2-PG) into phosphoenolpyruvate (PEP). It is essential for the degradation of carbohydrates via glycolysis. This is Enolase from Thermococcus onnurineus (strain NA1).